We begin with the raw amino-acid sequence, 1455 residues long: Nik-related protein kinase (1455 aa).

The Protein kinase domain occupies 25 to 313 (FSLDKAIGLG…SGNMLLHPFV (289 aa)). Residues 31–39 (IGLGTYGRI) and lysine 54 each bind ATP. The Proton acceptor role is filled by aspartate 177. 2 disordered regions span residues 385-404 (LHGE…PQDQ) and 471-568 (TQDN…EDKE). The span at 471–480 (TQDNKATSPE) shows a compositional bias: polar residues. The segment covering 494 to 505 (EALETEQPKDLD) has biased composition (basic and acidic residues). Over residues 520–531 (QPRQGQAAEQQQ) the composition is skewed to low complexity. Residues 540–568 (PPEEDREPEQAEVQEEAVEPPQAEIEDKE) show a composition bias toward acidic residues. Positions 716–750 (RRRHRRWEDIFNQHEEQLRRVENDREDDSSDNDEV) form a coiled coil. Disordered stretches follow at residues 760–854 (IEPH…PPYS) and 1029–1080 (AFGN…TETS). Residues serine 847 and serine 850 each carry the phosphoserine modification. Residues 1029 to 1038 (AFGNHGANRG) are compositionally biased toward low complexity. Positions 1044-1078 (RNREANGRNEENGAFGRDQHVFPEFEHEESDRGTE) are enriched in basic and acidic residues. A CNH domain is found at 1138-1425 (SSEVYCGSLW…RFLCARGDKM (288 aa)).

It belongs to the protein kinase superfamily. STE Ser/Thr protein kinase family. STE20 subfamily.

The enzyme catalyses L-seryl-[protein] + ATP = O-phospho-L-seryl-[protein] + ADP + H(+). It carries out the reaction L-threonyl-[protein] + ATP = O-phospho-L-threonyl-[protein] + ADP + H(+). Its function is as follows. May phosphorylate cofilin-1 and induce actin polymerization through this process, during the late stages of embryogenesis. Involved in the TNF-alpha-induced signaling pathway. In Mus musculus (Mouse), this protein is Nik-related protein kinase (Nrk).